Reading from the N-terminus, the 469-residue chain is UDP-N-acetylmuramate--L-alanine ligase (469 aa).

ATP is bound at residue 113-119; the sequence is GSHGKTT.

It belongs to the MurCDEF family.

The protein localises to the cytoplasm. It carries out the reaction UDP-N-acetyl-alpha-D-muramate + L-alanine + ATP = UDP-N-acetyl-alpha-D-muramoyl-L-alanine + ADP + phosphate + H(+). The protein operates within cell wall biogenesis; peptidoglycan biosynthesis. Functionally, cell wall formation. The protein is UDP-N-acetylmuramate--L-alanine ligase of Sorangium cellulosum (strain So ce56) (Polyangium cellulosum (strain So ce56)).